The following is a 377-amino-acid chain: MIEVIDGQRQLKACKRIVVKIGSSLLTANGQGLDLDAISHWAMQIADLHNAGHEIILVSSGAVAEGMVRMKLTSRPTDLPSLQACAAIGQMGLIHTWSSVLEKHTIQTAQVLLTHDDLADRRRYLNSCDALQNLIEWRVIPVINENDTVSTDEIRFGDNDTLAAMVAGQVHADLLIILTDQQGMFDSDPRSNPNAKLLTTVNAMDDALFEMAGGGGVLGRGGMVTKVRAARLAAKSGCPTLIASGESDHVLSRLMSGELLGTLFSTDKDRITAHQQWLAAHLQTAGRLVIDAGAVEAIKQRHRSLLPVGVKAVEGHFNRGDVVECVDQSGQRVAVGRVNFSSRSAEIIKGLASDKVHQVLGEARSLEMIHRNHMAIY.

Lysine 20 lines the ATP pocket. Positions 60, 147, and 159 each coordinate substrate. Residue 179 to 180 participates in ATP binding; the sequence is TD. Residues 285-363 form the PUA domain; it reads AGRLVIDAGA…DKVHQVLGEA (79 aa).

Belongs to the glutamate 5-kinase family.

The protein localises to the cytoplasm. It catalyses the reaction L-glutamate + ATP = L-glutamyl 5-phosphate + ADP. Its pathway is amino-acid biosynthesis; L-proline biosynthesis; L-glutamate 5-semialdehyde from L-glutamate: step 1/2. In terms of biological role, catalyzes the transfer of a phosphate group to glutamate to form L-glutamate 5-phosphate. The polypeptide is Glutamate 5-kinase (Acinetobacter baylyi (strain ATCC 33305 / BD413 / ADP1)).